Reading from the N-terminus, the 346-residue chain is Phosphoribosylformylglycinamidine cyclo-ligase (346 aa).

The protein belongs to the AIR synthase family.

It localises to the cytoplasm. The catalysed reaction is 2-formamido-N(1)-(5-O-phospho-beta-D-ribosyl)acetamidine + ATP = 5-amino-1-(5-phospho-beta-D-ribosyl)imidazole + ADP + phosphate + H(+). Its pathway is purine metabolism; IMP biosynthesis via de novo pathway; 5-amino-1-(5-phospho-D-ribosyl)imidazole from N(2)-formyl-N(1)-(5-phospho-D-ribosyl)glycinamide: step 2/2. This Erwinia tasmaniensis (strain DSM 17950 / CFBP 7177 / CIP 109463 / NCPPB 4357 / Et1/99) protein is Phosphoribosylformylglycinamidine cyclo-ligase.